The primary structure comprises 548 residues: Rhotekin (548 aa).

Residues 10 to 85 (DLNMLYIRQM…LQRRKEAQVL (76 aa)) enclose the REM-1 domain. Phosphoserine occurs at positions 22 and 93. The disordered stretch occupies residues 83–103 (QVLGKTGRRPSDSVQPPERSP). Asymmetric dimethylarginine is present on Arg-217. Residue Ser-219 is modified to Phosphoserine. In terms of domain architecture, PH spans 296–403 (QPTASGTLRV…WMEALWQLFL (108 aa)). 3 positions are modified to phosphoserine: Ser-504, Ser-513, and Ser-528. Positions 506–548 (DAVPADHSLGPSRSVAPLPPQRSPQSRGFYSKSQLSTWLQSPV) are disordered. Polar residues predominate over residues 528 to 548 (SPQSRGFYSKSQLSTWLQSPV).

As to quaternary structure, interacts via its C-terminal region with the TAX1BP3 PDZ domain. This interaction facilitates Rho-mediated activation of the c-Fos serum response element (SRE). Interacts with SEPT9. Specifically binds to GTP-bound RHOA, RHOB and RHOC and inhibits their GTPase activity.

Functionally, mediates Rho signaling to activate NF-kappa-B and may confer increased resistance to apoptosis to cells in gastric tumorigenesis. May play a novel role in the organization of septin structures. The chain is Rhotekin from Rattus norvegicus (Rat).